A 373-amino-acid polypeptide reads, in one-letter code: Outer membrane protein C (373 aa).

A signal peptide spans 1 to 21 (MKVKVLSLLVPALLVAGAANA). The next 5 beta stranded transmembrane spans lie at 34–42 (LYGKVDGLH), 54–63 (QTYMRLGFKG), 74–84 (YGQWEYQIQGN), 92–101 (SWTRVAFAGL), and 107–115 (GSFDYGRNY). The tract at residues 116-133 (GVVYDVTSWTDVLPEFGG) is loop L3; may constrict the pore. Transmembrane regions (beta stranded) follow at residues 142–154 (MQQRGNGFATYRS), 164–171 (LNFAVQYQ), 197–203 (VGGSITY), 208–215 (FGIGAAVS), 244–250 (YTGGLKY), 255–262 (IYLAAQYT), 272–288 (NLGWANKAQNFEAVAQY), 294–301 (LRPSLAYL), 325–332 (VDVGATYY), 337–344 (MSTYVDYK), and 365–372 (VALGLVYQ).

It belongs to the Gram-negative porin family. Homotrimer. Forms mixed heterotrimers with OmpF and with PhoE; other mixed heterotrimers are also probable. As to quaternary structure, (Microbial infection) Upon infection with phage Sf6 associates with the mature bacteriophage capsid. Was originally suggested to be within the bacteriophage capsid. This has been disproven.

Its subcellular location is the cell outer membrane. It localises to the extracellular vesicle. Forms pores that allow passive diffusion of small molecules across the outer membrane. Functionally, (Microbial infection) Serves as a less-preferential secondary receptor during phage Sf6 infection; infection requires both lipopolysaccharide (LPS) and (in the absence of OmpA) OmpC can serve as the secondary receptor. The polypeptide is Outer membrane protein C (ompC) (Shigella flexneri).